A 638-amino-acid chain; its full sequence is LIM domain kinase 2 (638 aa).

LIM zinc-binding domains are found at residues 12–63 (CPGC…CPKD) and 72–124 (CHGC…CGKC). Residues 152–239 (LISMPATTEG…TLQLLIEHDP (88 aa)) enclose the PDZ domain. At Thr-210 the chain carries Phosphothreonine. A disordered region spans residues 279-304 (LRRRSLRRSNSISKSPGPSSPKEPLL). Residues 286–302 (RSNSISKSPGPSSPKEP) are compositionally biased toward low complexity. Residues Ser-293 and Ser-298 each carry the phosphoserine modification. In terms of domain architecture, Protein kinase spans 331-608 (LIHGEVLGKG…DSFEALSLYL (278 aa)). Residues 337–345 (LGKGFFGQA) and Lys-360 each bind ATP. Asp-451 is an active-site residue. A Phosphothreonine; by ROCK1 and CDC42BP modification is found at Thr-505.

Belongs to the protein kinase superfamily. TKL Ser/Thr protein kinase family. In terms of assembly, interacts with LIMK2b. As to quaternary structure, interacts with LIMK2a. Binds ROCK1 and MARF1. Interacts with NISCH. In terms of processing, phosphorylated on serine and/or threonine residues by ROCK1.

It is found in the cytoplasm. The protein localises to the cytoskeleton. It localises to the spindle. Its subcellular location is the microtubule organizing center. The protein resides in the centrosome. It is found in the nucleus. The protein localises to the perinuclear region. The catalysed reaction is L-seryl-[protein] + ATP = O-phospho-L-seryl-[protein] + ADP + H(+). It carries out the reaction L-threonyl-[protein] + ATP = O-phospho-L-threonyl-[protein] + ADP + H(+). In terms of biological role, serine/threonine-protein kinase that plays an essential role in the regulation of actin filament dynamics. Acts downstream of several Rho family GTPase signal transduction pathways. Involved in astral microtubule organization and mitotic spindle orientation during early stages of mitosis by mediating phosphorylation of TPPP. Displays serine/threonine-specific phosphorylation of myelin basic protein and histone (MBP) in vitro. Suppresses ciliogenesis via multiple pathways; phosphorylation of CFL1, suppression of directional trafficking of ciliary vesicles to the ciliary base, and by facilitating YAP1 nuclear localization where it acts as a transcriptional corepressor of the TEAD4 target genes AURKA and PLK1. The chain is LIM domain kinase 2 (LIMK2) from Homo sapiens (Human).